The sequence spans 519 residues: Pleckstrin homology domain-containing family A member 8 (519 aa).

The 93-residue stretch at 1 to 93 folds into the PH domain; sequence MEGVLYKWTN…WLVALGSAKA (93 aa). Thr-139 carries the phosphothreonine modification. Ser-145 is modified (phosphoserine). Thr-153 carries the post-translational modification Phosphothreonine. The disordered stretch occupies residues 274–302; sequence GEDNLGNHDSSLAQPASDSSSSPPESHWE. Residues 282 to 298 are compositionally biased toward low complexity; the sequence is DSSLAQPASDSSSSPPE. The interval 310–519 is glycolipid transfer protein homology domain; it reads TFFSTMNTSF…VHGLESDEVV (210 aa).

As to quaternary structure, homodimer. Interacts with ARF1; the interaction together with phosphatidylinositol 4-phosphate binding is required for FAPP2 GlcCer transfer ability.

The protein localises to the golgi apparatus. It is found in the trans-Golgi network membrane. The protein resides in the membrane. Cargo transport protein that is required for apical transport from the trans-Golgi network (TGN). Transports AQP2 from the trans-Golgi network (TGN) to sites of AQP2 phosphorylation. Mediates the non-vesicular transport of glucosylceramide (GlcCer) from the trans-Golgi network (TGN) to the plasma membrane and plays a pivotal role in the synthesis of complex glycosphingolipids. Binding of both phosphatidylinositol 4-phosphate (PIP) and ARF1 are essential for the GlcCer transfer ability. Also required for primary cilium formation, possibly by being involved in the transport of raft lipids to the apical membrane, and for membrane tubulation. In Canis lupus familiaris (Dog), this protein is Pleckstrin homology domain-containing family A member 8 (PLEKHA8).